The sequence spans 935 residues: MADPGPASFSTRANALLRKNLTYQKRNLWSNIRLIMIPFYLCILLVIIQILFDTQVNNSADNRCGCECIERNRAGKCQRELCGLEHSKPDQAFFCSIPRPPLWPPLLQIPRPESRDVRGLRDDSCRRTGSCPVTILFTGNNRSLGTTVSENLFTSSVSANASEILRTLANNVLGTTVEADFTNYLDPGIASNLSIYNIQPRCILNATFPFSFEQPPLKFEKELRCVQGSNLWTNTSKEVNDKIFKGYKKGNPEGKINEIAAAYDLLNTDRNNFNVHIWYNSTYKDDAGNRLIKLIRVPRSVNLVSNAYLQFLQGPGTRMLFEYVKEMPKPETSLRLDIASLIGPLFFTWVILLLFPVILSSLVYEKQQHLRIIMKMHGLGDGPYWMISYAYFLTISVLYVICLMIFGSAIGLKFFRLNSYSIQFVFYFLYLNLQIALAFLVSSVFSKVKTSTVASYIYVFGSGLLGLFLLNFLIEDSSFPRGWIIVMELYPGFSLYRGLYELAQFAFRGNLRGEDGMKWKDFGDSAMDDVFYIIVVEWFLALIAAYYIDKISSSGRNPLFFLQNPFKKSPSLRRPSLQRQGSKVSVDMEKPDVTHESKKVERLMLESSTSHAIVCDNLKKVYPGRDGNPPKLAVRGLSLAVPSGECFGMLGPNGAGKTSFINMMTGLLKPTSGTALVQGLDICNDMDRVYTSMGVCPQHDLLWETLTGREHLLFYGRLKNLKGADLNQAVEESLKSVNLFHGGVADKPAGKYSGGMKRRLSVAISLIGNPKVVYMDEPSTGLDPASRKNLWTVIKRAKQNTAIILTTHSMEEAEFLCDRLGIFVDGGLQCIGNPKELKGRYGGSYVFTMTTSSEHEQNVEKLIKDVSPNAKKIYHIAGTQKFELPKEEVRISEVFQAVEKAKSNFTVFAWGLADTTLEDVFIKVVRNGQAFNVFS.

7 helical membrane passes run 34-54, 338-358, 392-412, 424-444, 454-474, 483-503, and 528-548; these read LIMIPFYLCILLVIIQILFDT, IASLIGPLFFTWVILLLFPVI, FLTISVLYVICLMIFGSAIGL, FVFYFLYLNLQIALAFLVSSV, ASYIYVFGSGLLGLFLLNFLI, WIIVMELYPGFSLYRGLYELA, and DDVFYIIVVEWFLALIAAYYI. The disordered stretch occupies residues 571–591; the sequence is SLRRPSLQRQGSKVSVDMEKP. Residues 613-850 enclose the ABC transporter domain; the sequence is IVCDNLKKVY…YGGSYVFTMT (238 aa). 651-658 is a binding site for ATP; that stretch reads GPNGAGKT.

The protein belongs to the ABC transporter superfamily. ABCA family. CPR flippase (TC 3.A.1.211) subfamily.

Its subcellular location is the membrane. The chain is ABC transporter A family member 7 (ABCA7) from Arabidopsis thaliana (Mouse-ear cress).